The primary structure comprises 258 residues: Ribonuclease PH (258 aa).

Phosphate is bound by residues R88 and 126-128; that span reads GTR.

It belongs to the RNase PH family. In terms of assembly, homohexameric ring arranged as a trimer of dimers.

The catalysed reaction is tRNA(n+1) + phosphate = tRNA(n) + a ribonucleoside 5'-diphosphate. Phosphorolytic 3'-5' exoribonuclease that plays an important role in tRNA 3'-end maturation. Removes nucleotide residues following the 3'-CCA terminus of tRNAs; can also add nucleotides to the ends of RNA molecules by using nucleoside diphosphates as substrates, but this may not be physiologically important. Probably plays a role in initiation of 16S rRNA degradation (leading to ribosome degradation) during starvation. The chain is Ribonuclease PH from Mycobacteroides abscessus (strain ATCC 19977 / DSM 44196 / CCUG 20993 / CIP 104536 / JCM 13569 / NCTC 13031 / TMC 1543 / L948) (Mycobacterium abscessus).